Reading from the N-terminus, the 330-residue chain is ADP-L-glycero-D-manno-heptose-6-epimerase (330 aa).

NADP(+) contacts are provided by residues 11–12, 32–33, Lys39, Lys54, 75–79, and Asn92; these read FI, DN, and EGACS. The active-site Proton acceptor is Tyr139. Lys143 contacts NADP(+). Residue Asn168 coordinates substrate. 2 residues coordinate NADP(+): Val169 and Lys177. The Proton acceptor role is filled by Lys177. Residues Arg179, His186, 200–203, Arg213, and Tyr292 contribute to the substrate site; that span reads FGEY.

Belongs to the NAD(P)-dependent epimerase/dehydratase family. HldD subfamily. In terms of assembly, homopentamer. It depends on NADP(+) as a cofactor.

It catalyses the reaction ADP-D-glycero-beta-D-manno-heptose = ADP-L-glycero-beta-D-manno-heptose. The protein operates within nucleotide-sugar biosynthesis; ADP-L-glycero-beta-D-manno-heptose biosynthesis; ADP-L-glycero-beta-D-manno-heptose from D-glycero-beta-D-manno-heptose 7-phosphate: step 4/4. Catalyzes the interconversion between ADP-D-glycero-beta-D-manno-heptose and ADP-L-glycero-beta-D-manno-heptose via an epimerization at carbon 6 of the heptose. The chain is ADP-L-glycero-D-manno-heptose-6-epimerase from Burkholderia pseudomallei (strain K96243).